The following is a 512-amino-acid chain: Kelch repeat protein C2 (512 aa).

Residues 2-67 form the BTB domain; that stretch reads ESVIFSINGE…MRWKKINITI (66 aa). Kelch repeat units follow at residues 216-261, 262-307, 309-354, 356-403, 405-449, and 452-498; these read IKHN…LHNC, LYII…VNDG, LYVI…FVND, IYVM…EYDG, IYVI…SCGD, and LIIA…THKS.

The protein belongs to the poxviruses Kelch family.

The sequence is that of Kelch repeat protein C2 from Vaccinia virus (strain Copenhagen) (VACV).